A 232-amino-acid polypeptide reads, in one-letter code: Ferric nitrobindin-like protein (232 aa).

Positions 1-10 (MSENETSKTG) are enriched in polar residues. The disordered stretch occupies residues 1-33 (MSENETSKTGGNAGVPGSGADAPSLSDSPAISG). Positions 85-91 (GVWRGEG) match the GXWXGXG motif.

Belongs to the nitrobindin family.

This is Ferric nitrobindin-like protein from Corynebacterium efficiens (strain DSM 44549 / YS-314 / AJ 12310 / JCM 11189 / NBRC 100395).